We begin with the raw amino-acid sequence, 922 residues long: Neuropilin-1 (922 aa).

Residues 1–21 (MERGLPLLCATLALALALAGA) form the signal peptide. Residues 22–855 (FRSDKCGGTI…PGNVLKTLDP (834 aa)) are Extracellular-facing. Disulfide bonds link cysteine 27-cysteine 54, cysteine 82-cysteine 104, and cysteine 147-cysteine 173. CUB domains lie at 27–141 (CGGT…YEIF) and 147–265 (CSQN…YSVL). Residue asparagine 150 is glycosylated (N-linked (GlcNAc...) asparagine). Residues glutamate 195, aspartate 209, and aspartate 250 each contribute to the Ca(2+) site. A disulfide bridge connects residues cysteine 206 and cysteine 228. N-linked (GlcNAc...) asparagine glycans are attached at residues asparagine 261, asparagine 300, and asparagine 522. Cystine bridges form between cysteine 275/cysteine 424 and cysteine 431/cysteine 583. F5/8 type C domains follow at residues 275 to 424 (CMEA…VYGC) and 431 to 583 (CSGM…LLGC). Serine 612 carries O-linked (Xyl...) (chondroitin sulfate) serine; alternate glycosylation. An O-linked (Xyl...) (heparan sulfate) serine; alternate glycan is attached at serine 612. An MAM domain is found at 645 to 811 (TYGFNCEFGW…NHIPQEDCAK (167 aa)). The O-linked (Xyl...) (chondroitin sulfate) serine glycan is linked to serine 829. Asparagine 841 carries an N-linked (GlcNAc...) asparagine glycan. The chain crosses the membrane as a helical span at residues 856-880 (ILITIIAMSALGVLLGAVCGVVLYC). The Cytoplasmic segment spans residues 881 to 922 (ACWHNGMSERNLSALENYNFELVDGVKLKKDKLNPQSNYSEA). Serine 893 bears the Phosphoserine mark.

This sequence belongs to the neuropilin family. In terms of assembly, homodimer, and heterodimer with NRP2. Binds PLXNB1. Interacts with FER. Interacts with VEGFA. Interacts with ABCB8/MITOSUR in mitochondria. As to expression, found in the embryonic nervous system. Expressed in dorsal root ganglia.

It is found in the mitochondrion membrane. The protein resides in the cell membrane. The protein localises to the cytoplasm. Cell-surface receptor involved in the development of the cardiovascular system, in angiogenesis, in the formation of certain neuronal circuits and in organogenesis outside the nervous system. Mediates the chemorepulsant activity of semaphorins. Recognizes a C-end rule (CendR) motif R/KXXR/K on its ligands which causes cellular internalization and vascular leakage. It binds to semaphorin 3A, the PLGF-2 isoform of PGF, the VEGF165 isoform of VEGFA and VEGFB. Coexpression with KDR results in increased VEGF165 binding to KDR as well as increased chemotaxis. Regulates VEGF-induced angiogenesis. Binding to VEGFA initiates a signaling pathway needed for motor neuron axon guidance and cell body migration, including for the caudal migration of facial motor neurons from rhombomere 4 to rhombomere 6 during embryonic development. Regulates mitochondrial iron transport via interaction with ABCB8/MITOSUR. The sequence is that of Neuropilin-1 (Nrp1) from Rattus norvegicus (Rat).